Reading from the N-terminus, the 158-residue chain is uncharacterized protein (158 aa).

This is an uncharacterized protein from Saccharolobus islandicus (Sulfolobus islandicus).